The sequence spans 233 residues: 2-C-methyl-D-erythritol 4-phosphate cytidylyltransferase (233 aa).

This sequence belongs to the IspD/TarI cytidylyltransferase family. IspD subfamily.

It carries out the reaction 2-C-methyl-D-erythritol 4-phosphate + CTP + H(+) = 4-CDP-2-C-methyl-D-erythritol + diphosphate. The protein operates within isoprenoid biosynthesis; isopentenyl diphosphate biosynthesis via DXP pathway; isopentenyl diphosphate from 1-deoxy-D-xylulose 5-phosphate: step 2/6. Its function is as follows. Catalyzes the formation of 4-diphosphocytidyl-2-C-methyl-D-erythritol from CTP and 2-C-methyl-D-erythritol 4-phosphate (MEP). The polypeptide is 2-C-methyl-D-erythritol 4-phosphate cytidylyltransferase (Carboxydothermus hydrogenoformans (strain ATCC BAA-161 / DSM 6008 / Z-2901)).